A 215-amino-acid chain; its full sequence is 3-demethoxyubiquinol 3-hydroxylase (215 aa).

Fe cation-binding residues include E64, E94, H97, E146, E178, and H181.

The protein belongs to the COQ7 family. Fe cation is required as a cofactor.

The protein localises to the cell membrane. It carries out the reaction a 5-methoxy-2-methyl-3-(all-trans-polyprenyl)benzene-1,4-diol + AH2 + O2 = a 3-demethylubiquinol + A + H2O. The protein operates within cofactor biosynthesis; ubiquinone biosynthesis. Catalyzes the hydroxylation of 2-nonaprenyl-3-methyl-6-methoxy-1,4-benzoquinol during ubiquinone biosynthesis. The chain is 3-demethoxyubiquinol 3-hydroxylase from Stutzerimonas stutzeri (strain A1501) (Pseudomonas stutzeri).